Reading from the N-terminus, the 92-residue chain is YcgL domain-containing protein VC0395_A1544/VC395_2072 (92 aa).

Positions 1-84 (MLCSIYKSPK…PPENLLEQHK (84 aa)) constitute a YcgL domain. The interval 71 to 92 (QLPPPPENLLEQHKERKARQTP) is disordered.

The protein is YcgL domain-containing protein VC0395_A1544/VC395_2072 of Vibrio cholerae serotype O1 (strain ATCC 39541 / Classical Ogawa 395 / O395).